A 156-amino-acid chain; its full sequence is ATP synthase subunit b (156 aa).

The chain crosses the membrane as a helical span at residues 7-29; it reads LFGQTIAFAIFVWFCMKFVWPPL.

Belongs to the ATPase B chain family. F-type ATPases have 2 components, F(1) - the catalytic core - and F(0) - the membrane proton channel. F(1) has five subunits: alpha(3), beta(3), gamma(1), delta(1), epsilon(1). F(0) has three main subunits: a(1), b(2) and c(10-14). The alpha and beta chains form an alternating ring which encloses part of the gamma chain. F(1) is attached to F(0) by a central stalk formed by the gamma and epsilon chains, while a peripheral stalk is formed by the delta and b chains.

The protein resides in the cell inner membrane. F(1)F(0) ATP synthase produces ATP from ADP in the presence of a proton or sodium gradient. F-type ATPases consist of two structural domains, F(1) containing the extramembraneous catalytic core and F(0) containing the membrane proton channel, linked together by a central stalk and a peripheral stalk. During catalysis, ATP synthesis in the catalytic domain of F(1) is coupled via a rotary mechanism of the central stalk subunits to proton translocation. Functionally, component of the F(0) channel, it forms part of the peripheral stalk, linking F(1) to F(0). This chain is ATP synthase subunit b, found in Ectopseudomonas mendocina (strain ymp) (Pseudomonas mendocina).